Reading from the N-terminus, the 378-residue chain is GDP-mannose 3,5-epimerase 1 (378 aa).

Residues 36-62, D60, and D80 contribute to the NAD(+) site; that span reads GAGGFIGSHIARRLKSEGHYIIASDWK. Residues G105 and 145 to 147 contribute to the substrate site; that span reads SAC. Y175 and K179 together coordinate NAD(+). The active-site Proton acceptor is Y175. Substrate-binding positions include N204, 217 to 219, K226, 242 to 244, R307, and S357; these read EKA and QTR.

The protein belongs to the NAD(P)-dependent epimerase/dehydratase family. As to quaternary structure, homodimer. It depends on NAD(+) as a cofactor.

It catalyses the reaction GDP-alpha-D-mannose = GDP-beta-L-gulose. It carries out the reaction GDP-beta-L-gulose = GDP-beta-L-galactose. Its pathway is cofactor biosynthesis; L-ascorbate biosynthesis via GDP-alpha-D-mannose pathway; L-ascorbate from GDP-alpha-D-mannose: step 1/5. In terms of biological role, catalyzes a reversible epimerization of GDP-D-mannose that precedes the committed step in the biosynthesis of vitamin C (L-ascorbate), resulting in the hydrolysis of the highly energetic glycosyl-pyrophosphoryl linkage. Able to catalyze 2 distinct epimerization reactions and can release both GDP-L-galactose and GDP-L-gulose from GDP-mannose. The polypeptide is GDP-mannose 3,5-epimerase 1 (Oryza sativa subsp. indica (Rice)).